The following is a 162-amino-acid chain: NADH-quinone oxidoreductase subunit I (162 aa).

4Fe-4S ferredoxin-type domains follow at residues 54 to 83 (RRYE…IESE) and 93 to 122 (TRYD…ETQI). [4Fe-4S] cluster is bound by residues Cys-63, Cys-66, Cys-69, Cys-73, Cys-102, Cys-105, Cys-108, and Cys-112.

Belongs to the complex I 23 kDa subunit family. NDH-1 is composed of 14 different subunits. Subunits NuoA, H, J, K, L, M, N constitute the membrane sector of the complex. It depends on [4Fe-4S] cluster as a cofactor.

Its subcellular location is the cell inner membrane. It carries out the reaction a quinone + NADH + 5 H(+)(in) = a quinol + NAD(+) + 4 H(+)(out). Functionally, NDH-1 shuttles electrons from NADH, via FMN and iron-sulfur (Fe-S) centers, to quinones in the respiratory chain. The immediate electron acceptor for the enzyme in this species is believed to be ubiquinone. Couples the redox reaction to proton translocation (for every two electrons transferred, four hydrogen ions are translocated across the cytoplasmic membrane), and thus conserves the redox energy in a proton gradient. The protein is NADH-quinone oxidoreductase subunit I of Burkholderia cenocepacia (strain HI2424).